The primary structure comprises 276 residues: Large ribosomal subunit protein uL2 (276 aa).

Residues V224–K276 form a disordered region. Positions K258–K276 are enriched in basic residues.

This sequence belongs to the universal ribosomal protein uL2 family. As to quaternary structure, part of the 50S ribosomal subunit. Forms a bridge to the 30S subunit in the 70S ribosome.

Its function is as follows. One of the primary rRNA binding proteins. Required for association of the 30S and 50S subunits to form the 70S ribosome, for tRNA binding and peptide bond formation. It has been suggested to have peptidyltransferase activity; this is somewhat controversial. Makes several contacts with the 16S rRNA in the 70S ribosome. The protein is Large ribosomal subunit protein uL2 of Geobacillus stearothermophilus (Bacillus stearothermophilus).